A 411-amino-acid chain; its full sequence is L-cysteine:1D-myo-inositol 2-amino-2-deoxy-alpha-D-glucopyranoside ligase (411 aa).

Cysteine 43 contacts Zn(2+). Residues 43 to 46 (CGIT), threonine 58, and 81 to 83 (NVT) each bind L-cysteinyl-5'-AMP. A 'HIGH' region motif is present at residues 45–55 (ITPYDATHLGH). Positions 186 to 191 (QRGGDP) match the 'ERGGDP' region motif. Tryptophan 226 is an L-cysteinyl-5'-AMP binding site. Cysteine 230 is a binding site for Zn(2+). 248-250 (GSD) contacts L-cysteinyl-5'-AMP. Position 255 (histidine 255) interacts with Zn(2+). Isoleucine 282 contacts L-cysteinyl-5'-AMP. The short motif at 288-292 (KMSKS) is the 'KMSKS' region element.

This sequence belongs to the class-I aminoacyl-tRNA synthetase family. MshC subfamily. As to quaternary structure, monomer. Zn(2+) serves as cofactor.

It catalyses the reaction 1D-myo-inositol 2-amino-2-deoxy-alpha-D-glucopyranoside + L-cysteine + ATP = 1D-myo-inositol 2-(L-cysteinylamino)-2-deoxy-alpha-D-glucopyranoside + AMP + diphosphate + H(+). Functionally, catalyzes the ATP-dependent condensation of GlcN-Ins and L-cysteine to form L-Cys-GlcN-Ins. The chain is L-cysteine:1D-myo-inositol 2-amino-2-deoxy-alpha-D-glucopyranoside ligase from Mycobacterium ulcerans (strain Agy99).